A 361-amino-acid chain; its full sequence is Phosphoserine aminotransferase (361 aa).

Arginine 42 contributes to the L-glutamate binding site. Residues 76-77 (AT), tryptophan 102, threonine 152, aspartate 172, and glutamine 195 each bind pyridoxal 5'-phosphate. At lysine 196 the chain carries N6-(pyridoxal phosphate)lysine. Residue 237–238 (NT) coordinates pyridoxal 5'-phosphate.

This sequence belongs to the class-V pyridoxal-phosphate-dependent aminotransferase family. SerC subfamily. In terms of assembly, homodimer. Pyridoxal 5'-phosphate is required as a cofactor.

It localises to the cytoplasm. The enzyme catalyses O-phospho-L-serine + 2-oxoglutarate = 3-phosphooxypyruvate + L-glutamate. It carries out the reaction 4-(phosphooxy)-L-threonine + 2-oxoglutarate = (R)-3-hydroxy-2-oxo-4-phosphooxybutanoate + L-glutamate. Its pathway is amino-acid biosynthesis; L-serine biosynthesis; L-serine from 3-phospho-D-glycerate: step 2/3. The protein operates within cofactor biosynthesis; pyridoxine 5'-phosphate biosynthesis; pyridoxine 5'-phosphate from D-erythrose 4-phosphate: step 3/5. Catalyzes the reversible conversion of 3-phosphohydroxypyruvate to phosphoserine and of 3-hydroxy-2-oxo-4-phosphonooxybutanoate to phosphohydroxythreonine. The polypeptide is Phosphoserine aminotransferase (Stenotrophomonas maltophilia (strain K279a)).